The primary structure comprises 296 residues: Short-chain dehydrogenase/reductase ascJ (296 aa).

Residues Ile28, Asp66, and Asn93 each coordinate NADP(+). Ser155 functions as the Proton donor in the catalytic mechanism. 3 residues coordinate NADP(+): Tyr168, Lys172, and Thr205. The active-site Proton acceptor is Tyr168. Catalysis depends on Lys172, which acts as the Lowers pKa of active site Tyr.

It belongs to the short-chain dehydrogenases/reductases (SDR) family.

The catalysed reaction is ascofuranol + A = ascofuranone + AH2. The protein operates within secondary metabolite biosynthesis; terpenoid biosynthesis. Short-chain dehydrogenase/reductase; part of the asc-2 gene cluster that mediates the biosynthesis of ascofuranone, a strong inhibitor of cyanide-insensitive alternative oxidases and a promising drug candidate against African trypanosomiasis. The first step in the pathway is performed by the non-reducing polyketide synthase ascC that produces orsellinic acid by condensing acetyl-CoA with 3 malonyl-CoA units. Orsellinic acid is then prenylated by the prenyltransferase ascA to yield ilicicolinic acid B. Ilicicolinic acid B is further reduced to ilicicolin B by the reductase ascB. The halogenase ascD then chlorinates ilicicolin B to produce ilicicolin A which is converted to ilicicolin A epoxide by the cytochrome P450 monooxygenase ascE that catalyzes stereoselective epoxidation of the terminal double bond of the prenyl group. Ilicicolin A epoxide is the last common precursor for the biosynthesis of ascofuranone and ascochlorin. The terpene cyclase ascF produces a monocyclic terpene, and the cyclization reaction is proposed to be initiated by protonation of the terminal epoxide of ilicicolin A epoxide to generate a monocyclic tertiarycation, which is followed by a series of hydride and methyl shifts with abstraction of proton, leading to the formation of the (14S,15R,19R)-trimethylcyclohexanone ring structure of ilicicolin C, which is finally reduced to ascochlorin by the dehydrogenase ascG. On the other hand, ilicicolin A epoxide is hydroxylated by the cytochrome P450 monooxygenase ascH, and the resultant product is cyclized by the terpene cyclase ascI to ascofuranol via protonation-initiated epoxide ring opening, which facilitates the 6-endo-tet cyclization to form the tetrahy-drofuran ring. Finally, ascofuranol is oxidized into ascofuranone by ascJ. This is Short-chain dehydrogenase/reductase ascJ from Acremonium egyptiacum (Oospora egyptiaca).